We begin with the raw amino-acid sequence, 380 residues long: MTSIKTKVIHGGISTDKTTGAVSVPIYQTSTYKQNGLGQPKEYEYSRSGNPTRHALEELIADLEGGVQGFAFSSGLAGIHAVLSLFSAGDHIILADDVYGGTFRLMDKVLTKTGIIYDLVDLSNLDDLKAAFKEETKAIYFETPSNPLLKVLDIKEISAIAKAHDALTLVDNTFATPYLQQPIALGADIVLHSATKYLGGHSDVVAGLVTTNSKELASEIGFLQNSIGAVLGPQDSWLVQRGIKTLALRMEAHSANAQKIAEFLETSKAVSKVYYPGLNSHPGHEIAKKQMSAFGGMISFELTDENAVKDFVENLSYFTLAESLGGVESLIEVPAVMTHASIPKELREEIGIKDGLIRLSVGVEAIEDLLTDIKEALEKK.

N6-(pyridoxal phosphate)lysine is present on K196.

Belongs to the trans-sulfuration enzymes family. Requires pyridoxal 5'-phosphate as cofactor.

It localises to the cytoplasm. It catalyses the reaction L,L-cystathionine + H2O = L-homocysteine + pyruvate + NH4(+). The enzyme catalyses an S-substituted L-cysteine + H2O = a thiol + pyruvate + NH4(+). It participates in amino-acid biosynthesis; L-methionine biosynthesis via de novo pathway; L-homocysteine from L-cystathionine: step 1/1. Its function is as follows. The enzymatic degradation of amino acids in cheese is believed to generate aroma compounds and therefore to be essential for flavor development. Cystathionine beta-lyase (CBL) can convert cystathionine to homocysteine but is also able to catalyze an alpha, gamma elimination. With methionine as a substrate, it produces volatile sulfur compounds which are important for flavor formation in Gouda cheese. The sequence is that of Cystathionine beta-lyase (metC) from Lactococcus lactis subsp. lactis (strain IL1403) (Streptococcus lactis).